The chain runs to 482 residues: Putative transposase R186 (482 aa).

Positions 416, 419, 433, and 435 each coordinate Zn(2+).

The protein in the central section; belongs to the transposase 2 family. This sequence in the C-terminal section; belongs to the transposase 35 family.

The sequence is that of Putative transposase R186 from Acanthamoeba polyphaga (Amoeba).